Consider the following 191-residue polypeptide: Small ribosomal subunit protein uS5 (191 aa).

Residues 21–84 form the S5 DRBM domain; sequence LVDKLVTINR…ERAKRTMIRV (64 aa). The segment at 161-191 is disordered; it reads PRHVASRRGKKAAELFGKREQGQTEAEVTNG. A compositionally biased stretch (basic and acidic residues) spans 171–182; that stretch reads KAAELFGKREQG.

This sequence belongs to the universal ribosomal protein uS5 family. As to quaternary structure, part of the 30S ribosomal subunit. Contacts proteins S4 and S8.

Functionally, with S4 and S12 plays an important role in translational accuracy. In terms of biological role, located at the back of the 30S subunit body where it stabilizes the conformation of the head with respect to the body. The sequence is that of Small ribosomal subunit protein uS5 from Gluconobacter oxydans (strain 621H) (Gluconobacter suboxydans).